The chain runs to 353 residues: Lactosylceramide 4-alpha-galactosyltransferase (353 aa).

Residues 1–22 are Cytoplasmic-facing; that stretch reads MSKPPDLLLRLLRGAPRQRVCT. A helical; Signal-anchor for type II membrane protein transmembrane segment spans residues 23–43; that stretch reads LFIIGFKFTFFVSIMIYWHVV. Over 44-353 the chain is Lumenal; sequence GEPKEKGQLY…TTHEAMKMYL (310 aa). Residue Asn121 is glycosylated (N-linked (GlcNAc...) asparagine). The DXD motif signature appears at 192 to 194; that stretch reads DTD. A glycan (N-linked (GlcNAc...) asparagine) is linked at Asn203.

The protein belongs to the glycosyltransferase 32 family.

Its subcellular location is the golgi apparatus membrane. The enzyme catalyses a beta-D-Gal-(1-&gt;4)-beta-D-Glc-(1&lt;-&gt;1)-Cer(d18:1(4E)) + UDP-alpha-D-galactose = a globoside Gb3Cer (d18:1(4E)) + UDP + H(+). It carries out the reaction a beta-D-Gal-(1&lt;-&gt;1')-ceramide + UDP-alpha-D-galactose = alpha-D-Gal-(1-&gt;4)-beta-D-Gal-(1&lt;-&gt;1')-Cer + UDP + H(+). It participates in glycolipid biosynthesis. Catalyzes the transfer of galactose from UDP-alpha-D-galactose to lactosylceramide/beta-D-galactosyl-(1-&gt;4)-beta-D-glucosyl-(1&lt;-&gt;1)-ceramide(d18:1(4E)) to produce globotriaosylceramide/globoside Gb3Cer (d18:1(4E)). Also able to transfer galactose to galactosylceramide/beta-D-Gal-(1&lt;-&gt;1')-Cer. Globoside Gb3Cer is a glycosphingolipid of the globo serie, one of the major types of neutral root structures of glycosphingolipids, that constitute a significant portion of mammalian cell membranes. This Pan troglodytes (Chimpanzee) protein is Lactosylceramide 4-alpha-galactosyltransferase (A4GALT).